We begin with the raw amino-acid sequence, 350 residues long: Sperm equatorial segment protein 1 (350 aa).

Residues 1-19 form the signal peptide; sequence MKPLVLLVALLLWPSSVPA. The N-linked (GlcNAc...) asparagine glycan is linked to Asn128.

Belongs to the SPESP1 family. Glycosylated. In testis there are two predominant forms of 77- and 67-kDa and a form of 47-kDa, whereas in epididymal sperm from caput, corpus, and cauda there are two forms of 47- and 43-kDa. Testis forms contain complex carbohydrate residues. Epididymal sperm forms are N-glycosylated. Then undergoes significant glycosylation in the testis and that the majority of these glycoconjugates are removed by the time sperm reach the caput epididymis. In terms of tissue distribution, highly expressed in testis, where it is localized in the acrosome of postmeiotic stages of spermiogenesis (round and elongating spermatids and in ejaculated spermatozoa) (at protein level). Poorly expressed in placenta and fetal lung.

Its subcellular location is the cytoplasmic vesicle. The protein resides in the secretory vesicle. It localises to the acrosome. In terms of biological role, involved in fertilization ability of sperm. This is Sperm equatorial segment protein 1 from Homo sapiens (Human).